We begin with the raw amino-acid sequence, 357 residues long: Aminomethyltransferase (357 aa).

The protein belongs to the GcvT family. As to quaternary structure, the glycine cleavage system is composed of four proteins: P, T, L and H.

It carries out the reaction N(6)-[(R)-S(8)-aminomethyldihydrolipoyl]-L-lysyl-[protein] + (6S)-5,6,7,8-tetrahydrofolate = N(6)-[(R)-dihydrolipoyl]-L-lysyl-[protein] + (6R)-5,10-methylene-5,6,7,8-tetrahydrofolate + NH4(+). Functionally, the glycine cleavage system catalyzes the degradation of glycine. This chain is Aminomethyltransferase, found in Halothermothrix orenii (strain H 168 / OCM 544 / DSM 9562).